Here is a 197-residue protein sequence, read N- to C-terminus: MANYPQLNKEVQQGEIKVVMHTNKGDMTFKLFPNIAPKTVENFVTHAKNGYYDGITFHRVINDFMIQGGDPTATGMGGESIYGGAFEDEFSLNAFNLYGALSMANSGPNTNGSQFFIVQMKEVPQNMLSQLTDGGWPQPIVDAYGEKGGTPWLDQKHTVFGQIIDGETTLEDIANTKVGPQDKPLHDVVIESIDVEE.

A PPIase cyclophilin-type domain is found at 14-195; it reads GEIKVVMHTN…HDVVIESIDV (182 aa).

The protein belongs to the cyclophilin-type PPIase family.

It carries out the reaction [protein]-peptidylproline (omega=180) = [protein]-peptidylproline (omega=0). In terms of biological role, PPIases accelerate the folding of proteins. It catalyzes the cis-trans isomerization of proline imidic peptide bonds in oligopeptides. This is Putative peptidyl-prolyl cis-trans isomerase from Staphylococcus aureus (strain COL).